Consider the following 85-residue polypeptide: Large ribosomal subunit protein bL27 (85 aa).

The disordered stretch occupies residues 1-21; it reads MAHKKGQGSTQNNRDSAGRRL.

Belongs to the bacterial ribosomal protein bL27 family.

This chain is Large ribosomal subunit protein bL27, found in Nitratiruptor sp. (strain SB155-2).